The primary structure comprises 485 residues: tRNA sulfurtransferase (485 aa).

One can recognise a THUMP domain in the interval Glu-61–Arg-165. ATP-binding positions include Leu-183–Ile-184, Lys-265, Gly-287, and Gln-296. The cysteines at positions 344 and 456 are disulfide-linked. The Rhodanese domain maps to Leu-404–Asn-483. The Cysteine persulfide intermediate role is filled by Cys-456.

This sequence belongs to the ThiI family.

The protein resides in the cytoplasm. It catalyses the reaction [ThiI sulfur-carrier protein]-S-sulfanyl-L-cysteine + a uridine in tRNA + 2 reduced [2Fe-2S]-[ferredoxin] + ATP + H(+) = [ThiI sulfur-carrier protein]-L-cysteine + a 4-thiouridine in tRNA + 2 oxidized [2Fe-2S]-[ferredoxin] + AMP + diphosphate. The catalysed reaction is [ThiS sulfur-carrier protein]-C-terminal Gly-Gly-AMP + S-sulfanyl-L-cysteinyl-[cysteine desulfurase] + AH2 = [ThiS sulfur-carrier protein]-C-terminal-Gly-aminoethanethioate + L-cysteinyl-[cysteine desulfurase] + A + AMP + 2 H(+). Its pathway is cofactor biosynthesis; thiamine diphosphate biosynthesis. Functionally, catalyzes the ATP-dependent transfer of a sulfur to tRNA to produce 4-thiouridine in position 8 of tRNAs, which functions as a near-UV photosensor. Also catalyzes the transfer of sulfur to the sulfur carrier protein ThiS, forming ThiS-thiocarboxylate. This is a step in the synthesis of thiazole, in the thiamine biosynthesis pathway. The sulfur is donated as persulfide by IscS. This is tRNA sulfurtransferase from Haemophilus influenzae (strain 86-028NP).